The chain runs to 332 residues: Formamidase (332 aa).

Positions 14-259 constitute a CN hydrolase domain; it reads FLTALIQYPV…WEIVTAEVYP (246 aa). Glu60 functions as the Proton acceptor in the catalytic mechanism. Residue Lys132 is the Proton donor of the active site. Cys165 functions as the Nucleophile in the catalytic mechanism.

Belongs to the carbon-nitrogen hydrolase superfamily. Aliphatic amidase family.

It carries out the reaction formamide + H2O = formate + NH4(+). Its function is as follows. Is an aliphatic amidase with a restricted substrate specificity, as it only hydrolyzes formamide. In Bacillus cereus (strain ZK / E33L), this protein is Formamidase.